A 227-amino-acid polypeptide reads, in one-letter code: C4-dicarboxylate TRAP transporter small permease protein DctQ (227 aa).

Topologically, residues 1–7 (MLRILDR) are cytoplasmic. The helical transmembrane segment at 8–28 (AEEVLIAALIATATVLIFVSV) threads the bilayer. The Periplasmic segment spans residues 29–67 (THRFTLGFVADFVGFFRGHGMTGAAAAAKSLYTTLRGIN). Residues 68–88 (LVWAQELCIILFVWMAKFGAA) traverse the membrane as a helical segment. The Cytoplasmic segment spans residues 89–112 (YGVRTGIHVGIDVLINRLDAPKRR). Residues 113–133 (FFILLGLGAGALFTGIIATLG) form a helical membrane-spanning segment. The Periplasmic portion of the chain corresponds to 134 to 149 (ANFVLHMYHASSTSPD). The chain crosses the membrane as a helical span at residues 150–170 (LELPMWLVYLAIPMGSSLMCF). Residues 171 to 227 (RFLQVAFGFARTGELPHHDHGHVDGVDTENEGIDAEGDVLLHSPLTPRDLVEKPKDN) are Cytoplasmic-facing.

This sequence belongs to the TRAP transporter small permease family. As to quaternary structure, the complex comprises the extracytoplasmic solute receptor protein DctP, and the two transmembrane proteins DctQ and DctM.

Its subcellular location is the cell inner membrane. In terms of biological role, part of the tripartite ATP-independent periplasmic (TRAP) transport system DctPQM involved in C4-dicarboxylates uptake. This is C4-dicarboxylate TRAP transporter small permease protein DctQ from Rhodobacter capsulatus (Rhodopseudomonas capsulata).